We begin with the raw amino-acid sequence, 51 residues long: Large ribosomal subunit protein eL39 (51 aa).

It belongs to the eukaryotic ribosomal protein eL39 family. In terms of assembly, part of the 50S ribosomal subunit.

The chain is Large ribosomal subunit protein eL39 from Pyrococcus furiosus (strain ATCC 43587 / DSM 3638 / JCM 8422 / Vc1).